We begin with the raw amino-acid sequence, 88 residues long: Probable small nuclear ribonucleoprotein F (88 aa).

A Sm domain is found at 7-79; the sequence is NPKPFLNNLT…VLYVRGVPED (73 aa).

The protein belongs to the snRNP Sm proteins family. SmF/LSm6 subfamily.

Its subcellular location is the nucleus. Probable common Sm protein, is found in U1 and U2 snRNPs and may be part of the spliceosome. This Arabidopsis thaliana (Mouse-ear cress) protein is Probable small nuclear ribonucleoprotein F.